The following is a 363-amino-acid chain: Protein-arginine kinase (363 aa).

A Phosphagen kinase C-terminal domain is found at 24–255; it reads IVLSSRIRLA…QQLIAQERAA (232 aa). Residues 27-31, histidine 92, arginine 126, 177-181, and 208-213 contribute to the ATP site; these read SSRIR, RASVM, and RGTYGE. The short motif at 338 to 343 is the RDXXRA motif of the pArg binding pocket involved in allosteric regulation element; sequence RDVRRA.

Belongs to the ATP:guanido phosphotransferase family.

It carries out the reaction L-arginyl-[protein] + ATP = N(omega)-phospho-L-arginyl-[protein] + ADP + H(+). With respect to regulation, appears to be allosterically activated by the binding of pArg-containing polypeptides to the pArg-binding pocket localized in the C-terminal domain of McsB. In terms of biological role, catalyzes the specific phosphorylation of arginine residues in a large number of proteins. Is part of the bacterial stress response system. Protein arginine phosphorylation has a physiologically important role and is involved in the regulation of many critical cellular processes, such as protein homeostasis, motility, competence, and stringent and stress responses, by regulating gene expression and protein activity. The chain is Protein-arginine kinase from Geobacillus thermodenitrificans (strain NG80-2).